The following is a 247-amino-acid chain: UDP-2,3-diacylglucosamine hydrolase (247 aa).

The Mn(2+) site is built by aspartate 8, histidine 10, aspartate 41, asparagine 79, and histidine 115. 79–80 (NH) serves as a coordination point for substrate. Residues aspartate 123, lysine 165, lysine 168, and histidine 196 each coordinate substrate. 2 residues coordinate Mn(2+): histidine 196 and histidine 198.

It belongs to the LpxH family. Mn(2+) is required as a cofactor.

The protein localises to the cell inner membrane. It carries out the reaction UDP-2-N,3-O-bis[(3R)-3-hydroxytetradecanoyl]-alpha-D-glucosamine + H2O = 2-N,3-O-bis[(3R)-3-hydroxytetradecanoyl]-alpha-D-glucosaminyl 1-phosphate + UMP + 2 H(+). Its pathway is glycolipid biosynthesis; lipid IV(A) biosynthesis; lipid IV(A) from (3R)-3-hydroxytetradecanoyl-[acyl-carrier-protein] and UDP-N-acetyl-alpha-D-glucosamine: step 4/6. In terms of biological role, hydrolyzes the pyrophosphate bond of UDP-2,3-diacylglucosamine to yield 2,3-diacylglucosamine 1-phosphate (lipid X) and UMP by catalyzing the attack of water at the alpha-P atom. Involved in the biosynthesis of lipid A, a phosphorylated glycolipid that anchors the lipopolysaccharide to the outer membrane of the cell. The polypeptide is UDP-2,3-diacylglucosamine hydrolase (Blochmanniella floridana).